A 1666-amino-acid polypeptide reads, in one-letter code: Atrochrysone carboxylic acid synthase PKS4 (1666 aa).

The Ketosynthase family 3 (KS3) domain occupies 15–452 (FEPIAIVGIG…GNAGFMVIEE (438 aa)). Active-site for beta-ketoacyl synthase activity residues include C194, H332, and H372. Residues 555-863 (AFCFSGQGGE…WMTALDALMR (309 aa)) form a malonyl-CoA:ACP transacylase (MAT) domain region. The active-site For acyl/malonyl transferase activity is the S632. The N-terminal hotdog fold stretch occupies residues 905–1034 (REVKASSTML…EQDLLESLSL (130 aa)). One can recognise a PKS/mFAS DH domain in the interval 905 to 1206 (REVKASSTML…MAKMKIYVLK (302 aa)). The tract at residues 935 to 1203 (LLNHVMAGYT…DVRMAKMKIY (269 aa)) is product template (PT) domain. Residues 1050-1206 (STDVLRKELA…MAKMKIYVLK (157 aa)) form a C-terminal hotdog fold region. Residue S1269 is modified to O-(pantetheine 4'-phosphoryl)serine. In terms of domain architecture, Carrier spans 1331–1395 (ATSPSLPIMP…TSTEPSQTLV (65 aa)). The interval 1334 to 1397 (PSLPIMPNGV…TEPSQTLVAN (64 aa)) is proline-rich linker region. The tract at residues 1444–1529 (TVIGIHCPGL…PPGVVGLTAQ (86 aa)) is alpha/beta hydrolase superfamily-type thioesterase (TE) domain.

The catalysed reaction is holo-[ACP] + 8 malonyl-CoA + 8 H(+) = atrochrysone carboxyl-[ACP] + 8 CO2 + 8 CoA + 2 H2O. It functions in the pathway secondary metabolite biosynthesis. Its function is as follows. Non-reducing polyketide synthase that synthesizes the universal anthraquinone precursor atrochrysone carboxylic acid from malonyl-CoA. Produces a mixture of both 3R and 3S enantiomers with an excess of the 3S form. PKS4 catalyzes both hepta- and octaketide synthesis and also yields 6-hydroxymusizin, probably via carboxylating activity inherent to the KS domain. In Calonarius odorifer (Mushroom), this protein is Atrochrysone carboxylic acid synthase PKS4.